We begin with the raw amino-acid sequence, 281 residues long: Ribosomal protein L11 methyltransferase (281 aa).

Residues Thr-133, Gly-154, Asp-175, and Asn-216 each contribute to the S-adenosyl-L-methionine site.

Belongs to the methyltransferase superfamily. PrmA family.

It is found in the cytoplasm. It catalyses the reaction L-lysyl-[protein] + 3 S-adenosyl-L-methionine = N(6),N(6),N(6)-trimethyl-L-lysyl-[protein] + 3 S-adenosyl-L-homocysteine + 3 H(+). Methylates ribosomal protein L11. This chain is Ribosomal protein L11 methyltransferase, found in Campylobacter jejuni subsp. jejuni serotype O:6 (strain 81116 / NCTC 11828).